The sequence spans 122 residues: Large ribosomal subunit protein uL14 (122 aa).

This sequence belongs to the universal ribosomal protein uL14 family. As to quaternary structure, part of the 50S ribosomal subunit. Forms a cluster with proteins L3 and L19. In the 70S ribosome, L14 and L19 interact and together make contacts with the 16S rRNA in bridges B5 and B8.

Binds to 23S rRNA. Forms part of two intersubunit bridges in the 70S ribosome. This chain is Large ribosomal subunit protein uL14, found in Mycobacterium sp. (strain KMS).